The following is a 101-amino-acid chain: METLAELPSPWFVYLVRCANNALYCGITTDVSRRFAQHQKGRGAKALRGKGPLELVWSLPVADGKSAALKLEYRIKALSKSQKEALVAGMARIDQLEIIFQ.

The GIY-YIG domain maps to 9–85 (SPWFVYLVRC…KALSKSQKEA (77 aa)).

The protein belongs to the UPF0213 family.

The polypeptide is UPF0213 protein VC0395_0675/VC395_A0575 (Vibrio cholerae serotype O1 (strain ATCC 39541 / Classical Ogawa 395 / O395)).